The primary structure comprises 434 residues: MRKSKVLTLGFQHVLAMYAGAVIVPLIVGSSLKLNAEQLAYLVSIDLLTCGIATLLQVWRNKFFGIGLPVMLGCTFTAVGPMIAIGSEYGMPAIYGSVLASGLFLALFAGFFGKLARFFPPIVTGSVVTIIGITLIPVAVQDMGGGQGSADFGSLSNLALSFGVLLFIILANRFFTGFIRAISILLGLIFGTIAGAFMGKVDIGPLLDASWFHGIHPFYFGFPTFHLPSILTMTLVAIVSVMESTGVFVALGKITEKELTADDLKRGYRSEGLASILGSIMNSFPYTTYSQNVGLIQISKVKSRDVVITAGFILVILGFMPKIAALTLLIPTAVLGGAMIAMFGMVVSSGIKMLGAIDLNNHENLLIIACSVSVGLGVTVAPNLFDHLPDSIKILTSNGIVAGSLTAILMNFLFTVGRKKQDESHASAENVHAA.

12 helical membrane-spanning segments follow: residues 9–29 (LGFQ…LIVG), 39–59 (LAYL…LQVW), 63–83 (FFGI…GPMI), 93–113 (AIYG…GFFG), 118–138 (FFPP…LIPV), 159–179 (ALSF…TGFI), 181–201 (AISI…MGKV), 218–238 (FYFG…LVAI), 306–326 (VVIT…IAAL), 327–347 (TLLI…GMVV), 365–385 (LLII…PNLF), and 394–414 (ILTS…NFLF).

Belongs to the nucleobase:cation symporter-2 (NCS2) (TC 2.A.40) family.

It localises to the cell membrane. Inhibited by the proton gradient disruptor carbonyl cyanide m-chlorophenylhydrazone (CCCP), but not by the sodium gradient disruptor ouabain. Hypoxanthine, xanthine, cytosine and uric acid act as competitive inhibitors. Its function is as follows. Uptake of the purines adenine and guanine, and the pyrimidine uracil. Transport is probably proton-dependent. This Paenibacillus larvae subsp. larvae (strain NRRL B-3650 / LMG 16245) protein is Nucleobase transporter PlUacP.